Consider the following 170-residue polypeptide: Myosin regulatory light chain 2 (170 aa).

The span at 1–13 (MSKAAKKKSSKKR) shows a compositional bias: basic residues. A disordered region spans residues 1 to 22 (MSKAAKKKSSKKRSGSEAAQFD). EF-hand domains lie at 24–59 (KTIQ…MGQI) and 93–128 (DPEA…KRGE). Residues aspartate 37, asparagine 39, aspartate 41, and aspartate 48 each contribute to the Ca(2+) site.

Myosin is a hexamer of 2 heavy chains and 4 light chains (two regulatory light chains and two essential light chains).

The sequence is that of Myosin regulatory light chain 2 (mlc-2) from Caenorhabditis elegans.